The primary structure comprises 285 residues: Pantothenate synthetase (285 aa).

Met33–His40 serves as a coordination point for ATP. Catalysis depends on His40, which acts as the Proton donor. Gln64 lines the (R)-pantoate pocket. Position 64 (Gln64) interacts with beta-alanine. Gly150–Asp153 is a binding site for ATP. Gln156 contacts (R)-pantoate. ATP is bound by residues Ala179 and Leu187–Arg190.

The protein belongs to the pantothenate synthetase family. In terms of assembly, homodimer.

Its subcellular location is the cytoplasm. It catalyses the reaction (R)-pantoate + beta-alanine + ATP = (R)-pantothenate + AMP + diphosphate + H(+). It functions in the pathway cofactor biosynthesis; (R)-pantothenate biosynthesis; (R)-pantothenate from (R)-pantoate and beta-alanine: step 1/1. Functionally, catalyzes the condensation of pantoate with beta-alanine in an ATP-dependent reaction via a pantoyl-adenylate intermediate. The sequence is that of Pantothenate synthetase from Caulobacter vibrioides (strain ATCC 19089 / CIP 103742 / CB 15) (Caulobacter crescentus).